The sequence spans 145 residues: Small ribosomal subunit protein uS19 (145 aa).

An N-acetylalanine modification is found at A2. K108 is covalently cross-linked (Glycyl lysine isopeptide (Lys-Gly) (interchain with G-Cter in SUMO2)).

It belongs to the universal ribosomal protein uS19 family. As to quaternary structure, component of the small ribosomal subunit.

It is found in the cytoplasm. Functionally, component of the small ribosomal subunit. The ribosome is a large ribonucleoprotein complex responsible for the synthesis of proteins in the cell. This is Small ribosomal subunit protein uS19 (RPS15) from Oryctolagus cuniculus (Rabbit).